We begin with the raw amino-acid sequence, 381 residues long: MAKKALLIGINYPGTAVELRGCVNDVHRMQKCLIELYGFANKDIVIMIDTDKSCIQPTGKNICDELDNLIASGQSGDFLVFHYSGHGTRIPPGIEDSEDPTGFDECITPCDMNLIKDQQFREMVSRVKEGCQLTIISDSCHSGGLIQEVKEQIGESHMKPVDKVKEQIEESHMKQPKLGIASYFLNIVMNLLATCGVSKSQRDRGGGEESFRGEIELEKDETLDIKTRYLPFESYLSLLKEQTGQTNIEPVRIRQTLLKLFGEDPSPNRQRGLSDLGNCEVDAGDSGASRLNAVTDNGILLSGCQTDQRSEDVYVTRTGKAYGAFSDAIQMILSAPRKDKKKITNKELVSEARVFLKKRGYSQRPGLYCHDRFVDKPFICY.

Active-site residues include His-86 and Cys-140. S-nitrosocysteine is present on Cys-140.

The protein belongs to the peptidase C14B family. Post-translationally, proteolytically processed; by an autocatalytic mechanism.

Functionally, cysteine protease that cleaves specifically after arginine residues. Does not cleave caspase-specific substrates. May be involved in the modulation of programmed cell death activated by oxidative stress. This Arabidopsis thaliana (Mouse-ear cress) protein is Metacaspase-8 (AMC8).